The sequence spans 141 residues: Large-conductance mechanosensitive channel (141 aa).

3 helical membrane passes run 8–28 (FALK…AAFG), 38–58 (IIMP…FFPL), and 80–100 (GNFL…FLIV).

It belongs to the MscL family. Homopentamer.

The protein localises to the cell inner membrane. Functionally, channel that opens in response to stretch forces in the membrane lipid bilayer. May participate in the regulation of osmotic pressure changes within the cell. The protein is Large-conductance mechanosensitive channel of Beijerinckia indica subsp. indica (strain ATCC 9039 / DSM 1715 / NCIMB 8712).